The following is a 159-amino-acid chain: Ribosomal RNA large subunit methyltransferase H (159 aa).

Residues Leu76, Gly108, and 127-132 (FGRLTL) each bind S-adenosyl-L-methionine.

It belongs to the RNA methyltransferase RlmH family. In terms of assembly, homodimer.

It is found in the cytoplasm. The enzyme catalyses pseudouridine(1915) in 23S rRNA + S-adenosyl-L-methionine = N(3)-methylpseudouridine(1915) in 23S rRNA + S-adenosyl-L-homocysteine + H(+). Functionally, specifically methylates the pseudouridine at position 1915 (m3Psi1915) in 23S rRNA. In Listeria monocytogenes serotype 4b (strain CLIP80459), this protein is Ribosomal RNA large subunit methyltransferase H.